A 37-amino-acid chain; its full sequence is Large ribosomal subunit protein bL36 (37 aa).

It belongs to the bacterial ribosomal protein bL36 family.

The polypeptide is Large ribosomal subunit protein bL36 (Tropheryma whipplei (strain Twist) (Whipple's bacillus)).